Consider the following 317-residue polypeptide: Ceramide reductase (317 aa).

The signal sequence occupies residues 1–27 (MATDARGVVAITGATGFLGRHLVRALA).

Belongs to the NAD(P)-dependent epimerase/dehydratase family.

Its subcellular location is the periplasm. It carries out the reaction N-acyl-3-oxosphinganine + NADH + H(+) = an N-acylsphinganine + NAD(+). It participates in lipid metabolism; sphingolipid metabolism. Functionally, involved in de novo bacterial ceramide synthesis. Catalyzes the reduction of bacterial oxidized ceramides to bacterial dihydroceramides. This chain is Ceramide reductase, found in Caulobacter vibrioides (strain NA1000 / CB15N) (Caulobacter crescentus).